Reading from the N-terminus, the 105-residue chain is Putative pterin-4-alpha-carbinolamine dehydratase (105 aa).

This sequence belongs to the pterin-4-alpha-carbinolamine dehydratase family.

It carries out the reaction (4aS,6R)-4a-hydroxy-L-erythro-5,6,7,8-tetrahydrobiopterin = (6R)-L-erythro-6,7-dihydrobiopterin + H2O. This is Putative pterin-4-alpha-carbinolamine dehydratase from Sinorhizobium medicae (strain WSM419) (Ensifer medicae).